Here is a 418-residue protein sequence, read N- to C-terminus: L-rhamnose isomerase (418 aa).

Mn(2+) is bound by residues histidine 262, aspartate 294, and aspartate 296.

Belongs to the rhamnose isomerase family. In terms of assembly, homotetramer. Mn(2+) serves as cofactor.

It localises to the cytoplasm. The enzyme catalyses L-rhamnopyranose = L-rhamnulose. It functions in the pathway carbohydrate degradation; L-rhamnose degradation; glycerone phosphate from L-rhamnose: step 1/3. Catalyzes the interconversion of L-rhamnose and L-rhamnulose. The chain is L-rhamnose isomerase from Yersinia pseudotuberculosis serotype O:1b (strain IP 31758).